The following is a 447-amino-acid chain: Protein king tubby (447 aa).

Residues G54 to S84 form a disordered region. Positions I62 to S84 are enriched in low complexity. S136 carries the post-translational modification Phosphoserine. Positions E168–S182 are enriched in low complexity. Residues E168–S191 form a disordered region.

It belongs to the TUB family.

The protein localises to the cytoplasm. It is found in the nucleus. It localises to the cell projection. The protein resides in the cilium membrane. Its subcellular location is the rhabdomere. The chain is Protein king tubby from Drosophila grimshawi (Hawaiian fruit fly).